Reading from the N-terminus, the 616-residue chain is Chaperone protein HscA (616 aa).

It belongs to the heat shock protein 70 family.

Functionally, chaperone involved in the maturation of iron-sulfur cluster-containing proteins. Has a low intrinsic ATPase activity which is markedly stimulated by HscB. Involved in the maturation of IscU. The chain is Chaperone protein HscA from Klebsiella pneumoniae (strain 342).